Reading from the N-terminus, the 175-residue chain is MSETDSTDFHEMREPRIEKVVVHMGVGQGGVELQNAETILEAITGQQTVRTKAKSPEPEFGLRQGDPIGAKVTLRDDTAVDFLERALPAADLDRRQFDNTGNVSFGIEEHTDFPSQEYDPNIGIYGMDVTVNLTRPGYRVAKRDQGTRQIPSNHRLNSEDAVSFLVSNFDVEVNE.

The protein belongs to the universal ribosomal protein uL5 family. As to quaternary structure, part of the 50S ribosomal subunit; contacts the 5S rRNA and probably tRNA. Forms a bridge to the 30S subunit in the 70S ribosome.

Its function is as follows. This is one of the proteins that bind and probably mediate the attachment of the 5S RNA into the large ribosomal subunit, where it forms part of the central protuberance. In the 70S ribosome it contacts protein S13 of the 30S subunit (bridge B1b), connecting the 2 subunits; this bridge is implicated in subunit movement. May contact the P site tRNA; the 5S rRNA and some of its associated proteins might help stabilize positioning of ribosome-bound tRNAs. The chain is Large ribosomal subunit protein uL5 from Halobacterium salinarum (strain ATCC 29341 / DSM 671 / R1).